Here is a 215-residue protein sequence, read N- to C-terminus: Probable phosphoglycerate mutase GpmB (215 aa).

Substrate is bound by residues 8 to 15 (RHGETQWN), 21 to 22 (QG), Arg58, 82 to 85 (ELDM), 104 to 105 (RR), and 151 to 152 (GI). His9 functions as the Tele-phosphohistidine intermediate in the catalytic mechanism. The active-site Proton donor/acceptor is Glu82.

Belongs to the phosphoglycerate mutase family. GpmB subfamily.

The catalysed reaction is (2R)-2-phosphoglycerate = (2R)-3-phosphoglycerate. The protein operates within carbohydrate degradation; glycolysis; pyruvate from D-glyceraldehyde 3-phosphate: step 3/5. This is Probable phosphoglycerate mutase GpmB from Enterobacter sp. (strain 638).